We begin with the raw amino-acid sequence, 482 residues long: ATP synthase subunit beta (482 aa).

ATP is bound at residue 162–169 (GGAGVGKT).

Belongs to the ATPase alpha/beta chains family. As to quaternary structure, F-type ATPases have 2 components, CF(1) - the catalytic core - and CF(0) - the membrane proton channel. CF(1) has five subunits: alpha(3), beta(3), gamma(1), delta(1), epsilon(1). CF(0) has four main subunits: a(1), b(1), b'(1) and c(9-12).

The protein localises to the cellular thylakoid membrane. It catalyses the reaction ATP + H2O + 4 H(+)(in) = ADP + phosphate + 5 H(+)(out). Functionally, produces ATP from ADP in the presence of a proton gradient across the membrane. The catalytic sites are hosted primarily by the beta subunits. The sequence is that of ATP synthase subunit beta from Nostoc sp. (strain PCC 7120 / SAG 25.82 / UTEX 2576).